Reading from the N-terminus, the 125-residue chain is Small ribosomal subunit protein uS12m (125 aa).

The disordered stretch occupies residues 1 to 26; it reads MPTINQLLRKKSSRQAPKLKSKKPAL. Residues 8 to 23 are compositionally biased toward basic residues; it reads LRKKSSRQAPKLKSKK.

The protein belongs to the universal ribosomal protein uS12 family.

The protein localises to the mitochondrion. The chain is Small ribosomal subunit protein uS12m (RPS12) from Prototheca wickerhamii.